The following is a 266-amino-acid chain: Type III pantothenate kinase (266 aa).

Residue 6–13 (DVGNSHTV) participates in ATP binding. 112 to 115 (GIDR) contacts substrate. The active-site Proton acceptor is the aspartate 114. Aspartate 134 serves as a coordination point for K(+). Residue threonine 137 coordinates ATP. Position 190 (threonine 190) interacts with substrate.

The protein belongs to the type III pantothenate kinase family. As to quaternary structure, homodimer. Requires NH4(+) as cofactor. It depends on K(+) as a cofactor.

It is found in the cytoplasm. It catalyses the reaction (R)-pantothenate + ATP = (R)-4'-phosphopantothenate + ADP + H(+). The protein operates within cofactor biosynthesis; coenzyme A biosynthesis; CoA from (R)-pantothenate: step 1/5. In terms of biological role, catalyzes the phosphorylation of pantothenate (Pan), the first step in CoA biosynthesis. This Desulfotalea psychrophila (strain LSv54 / DSM 12343) protein is Type III pantothenate kinase.